Here is a 602-residue protein sequence, read N- to C-terminus: Elongation factor 4 (602 aa).

One can recognise a tr-type G domain in the interval 2 to 184 (DHIRNFSIIA…AVIARMPPPK (183 aa)). Residues 14-19 (DHGKST) and 131-134 (NKMD) contribute to the GTP site.

It belongs to the TRAFAC class translation factor GTPase superfamily. Classic translation factor GTPase family. LepA subfamily.

The protein resides in the cell inner membrane. It carries out the reaction GTP + H2O = GDP + phosphate + H(+). In terms of biological role, required for accurate and efficient protein synthesis under certain stress conditions. May act as a fidelity factor of the translation reaction, by catalyzing a one-codon backward translocation of tRNAs on improperly translocated ribosomes. Back-translocation proceeds from a post-translocation (POST) complex to a pre-translocation (PRE) complex, thus giving elongation factor G a second chance to translocate the tRNAs correctly. Binds to ribosomes in a GTP-dependent manner. The sequence is that of Elongation factor 4 from Leptothrix cholodnii (strain ATCC 51168 / LMG 8142 / SP-6) (Leptothrix discophora (strain SP-6)).